We begin with the raw amino-acid sequence, 229 residues long: Sorting nexin-10A (229 aa).

Residues 11-128 (FISVWVRDPQ…HLFLQSQLSI (118 aa)) form the PX domain. A 1,2-diacyl-sn-glycero-3-phospho-(1D-myo-inositol-3-phosphate) contacts are provided by arginine 54 and arginine 95.

It belongs to the sorting nexin family.

The protein resides in the cytoplasm. The protein localises to the endosome membrane. Its subcellular location is the cytoskeleton. It is found in the microtubule organizing center. It localises to the centrosome. Its function is as follows. Probable phosphoinositide-binding protein involved in protein sorting and membrane trafficking in endosomes. May play a role in cilium biogenesis through regulation of the transport and the localization of proteins to the cilium. This Danio rerio (Zebrafish) protein is Sorting nexin-10A (snx10a).